Here is a 155-residue protein sequence, read N- to C-terminus: Non-secretory ribonuclease (155 aa).

A signal peptide spans 1–25; it reads MGPKLLESRLCLLLLLGLVLMLASC. Residue Lys33 coordinates substrate. Catalysis depends on His38, which acts as the Proton acceptor. The N-linked (GlcNAc...) asparagine glycan is linked to Asn41. Disulfide bonds link Cys47–Cys106, Cys61–Cys118, Cys79–Cys133, and Cys86–Cys94. Tyr57 bears the 3'-nitrotyrosine mark. Residue 62-66 participates in substrate binding; sequence KDINT. N-linked (GlcNAc...) asparagine glycans are attached at residues Asn83, Asn88, and Asn107. His150 (proton donor) is an active-site residue.

Belongs to the pancreatic ribonuclease family. As to quaternary structure, interacts with and forms a tight 1:1 complex with RNH1. Dimerization of two such complexes may occur.

The protein localises to the lysosome. It localises to the cytoplasmic granule. It carries out the reaction an [RNA] containing cytidine + H2O = an [RNA]-3'-cytidine-3'-phosphate + a 5'-hydroxy-ribonucleotide-3'-[RNA].. The catalysed reaction is an [RNA] containing uridine + H2O = an [RNA]-3'-uridine-3'-phosphate + a 5'-hydroxy-ribonucleotide-3'-[RNA].. In terms of biological role, this is a non-secretory ribonuclease. It is a pyrimidine specific nuclease with a slight preference for U. Cytotoxin and helminthotoxin. Possesses a wide variety of biological activities. This is Non-secretory ribonuclease (Rnase2) from Mus musculus (Mouse).